Reading from the N-terminus, the 1371-residue chain is Soluble scavenger receptor cysteine-rich domain-containing protein SSC5D (1371 aa).

An N-terminal signal peptide occupies residues 1–16 (MRGLACLLAMLVGIQA). One can recognise an SRCR 1 domain in the interval 20–120 (LRLADGPHGC…HEEDAGVVCV (101 aa)). 3 disulfide bridges follow: cysteine 45/cysteine 109, cysteine 58/cysteine 119, and cysteine 89/cysteine 99. The segment covering 143–154 (LSGELSPSSEEP) has biased composition (low complexity). The interval 143 to 200 (LSGELSPSSEEPPITHAPQPAASSQNGPRKKNPRPPKQTKSTRAPVLTNGAPHQERLR) is disordered. 2 SRCR domains span residues 199 to 299 (LRLV…LVCT) and 305 to 405 (IRLA…AVCD). Cystine bridges form between cysteine 224–cysteine 288, cysteine 237–cysteine 298, cysteine 268–cysteine 278, cysteine 330–cysteine 394, cysteine 343–cysteine 404, and cysteine 374–cysteine 384. Asparagine 377 and asparagine 422 each carry an N-linked (GlcNAc...) asparagine glycan. The interval 431 to 466 (TSVGQMPGPAGPWPPSASPTAPPEPGPEAGSPQLRL) is disordered. Pro residues predominate over residues 439 to 456 (PAGPWPPSASPTAPPEPG). The region spanning 464-565 (LRLVAGPSRC…HNEDVGVTCT (102 aa)) is the SRCR 4 domain. Cystine bridges form between cysteine 489–cysteine 554, cysteine 502–cysteine 564, and cysteine 534–cysteine 544. The segment at 592–756 (WLPGELTTKP…AGVPVPSGPF (165 aa)) is disordered. Polar residues predominate over residues 599-611 (TKPSASLTSSVPQ). Over residues 622 to 633 (KSTKKWVTKNAR) the composition is skewed to basic residues. Residues 653–663 (TPTSLHPTART) show a composition bias toward polar residues. Basic and acidic residues predominate over residues 665–676 (ELPKRLTTEAPH). Positions 698–740 (PVVSQSTQGPQEVTSEATTTENPQTSLEPSGENTEGSLESSQD) are enriched in polar residues. Over residues 741 to 755 (PATTPTAGVPVPSGP) the composition is skewed to low complexity. The 101-residue stretch at 758-858 (VRLADGPNRC…HEEDVVLTCT (101 aa)) folds into the SRCR 5 domain. 3 disulfides stabilise this stretch: cysteine 783/cysteine 847, cysteine 796/cysteine 857, and cysteine 827/cysteine 837. 2 disordered regions span residues 888-1270 (RPGH…PFGP) and 1351-1371 (STPV…RGDV). Polar residues predominate over residues 894 to 912 (SWATTTNTEVPSPATQNLP). Low complexity-rich tracts occupy residues 936–957 (KGTP…KSPG), 981–1004 (PTSA…RQTS), and 1018–1035 (GTSS…LPSP). 2 stretches are compositionally biased toward polar residues: residues 1039 to 1086 (ALST…TSEL) and 1102 to 1148 (SSDS…NPQQ). Residues asparagine 1044 and asparagine 1131 are each glycosylated (N-linked (GlcNAc...) asparagine). Positions 1149 to 1163 (PRSPHPATSPQPPTN) are enriched in pro residues. Positions 1164-1189 (THPSSTPATPTESLPSSRKTELSSPT) are enriched in polar residues. Residues 1218 to 1230 (ASESGPSSPSPAS) show a composition bias toward low complexity. Over residues 1244–1261 (RSQTLHSASDHLTQGPTP) the composition is skewed to polar residues.

In terms of assembly, interacts with LGALS1 and laminin. In terms of processing, partially N- and O-glycosylated. Detected throughout the gastrointestinal and genitourinary tracts, in serosal salivary gland, the exocrine part of pancreas and testis, as well as in a few tubular structures in kidney. Not detected in lung and heart (at protein level). Strongly expressed in testis, kidney and pancreas, with lower levels detected in bone marrow, spleen, lung, liver, colon, stomach and skeletal muscle. Very low levels or no expression detected in thymus, esophagus, jejunum, ileum, duodenum, ovary, uterus, heart, trachea, brain, cerebellum and bladder.

It is found in the secreted. The protein resides in the cytoplasm. In terms of biological role, binds to extracellular matrix proteins. Binds to pathogen-associated molecular patterns (PAMPs) present on the cell walls of Gram-positive and Gram-negative bacteria and fungi, behaving as a pattern recognition receptor (PRR). Induces bacterial and fungal aggregation and subsequent inhibition of PAMP-induced cytokine release. Does not possess intrinsic bactericidal activity. May play a role in the innate defense and homeostasis of certain epithelial surfaces. In Mus musculus (Mouse), this protein is Soluble scavenger receptor cysteine-rich domain-containing protein SSC5D (Ssc5d).